We begin with the raw amino-acid sequence, 105 residues long: Tyrosine-protein phosphatase 12 (105 aa).

In terms of domain architecture, Tyrosine-protein phosphatase spans 1–105 (WRMIWEKRVE…NLRRIVRTEF (105 aa)). Substrate is bound at residue Asp84.

This sequence belongs to the protein-tyrosine phosphatase family.

The catalysed reaction is O-phospho-L-tyrosyl-[protein] + H2O = L-tyrosyl-[protein] + phosphate. The protein is Tyrosine-protein phosphatase 12 (STY-12) of Styela plicata (Wrinkled sea squirt).